We begin with the raw amino-acid sequence, 346 residues long: tRNA N6-adenosine threonylcarbamoyltransferase (346 aa).

The Fe cation site is built by histidine 111 and histidine 115. Residues leucine 134 to glycine 138, aspartate 167, glycine 180, and asparagine 279 contribute to the substrate site. Residue aspartate 307 participates in Fe cation binding.

Belongs to the KAE1 / TsaD family. It depends on Fe(2+) as a cofactor.

Its subcellular location is the cytoplasm. It catalyses the reaction L-threonylcarbamoyladenylate + adenosine(37) in tRNA = N(6)-L-threonylcarbamoyladenosine(37) in tRNA + AMP + H(+). Required for the formation of a threonylcarbamoyl group on adenosine at position 37 (t(6)A37) in tRNAs that read codons beginning with adenine. Is involved in the transfer of the threonylcarbamoyl moiety of threonylcarbamoyl-AMP (TC-AMP) to the N6 group of A37, together with TsaE and TsaB. TsaD likely plays a direct catalytic role in this reaction. In Burkholderia ambifaria (strain MC40-6), this protein is tRNA N6-adenosine threonylcarbamoyltransferase.